A 337-amino-acid chain; its full sequence is Holliday junction branch migration complex subunit RuvB (337 aa).

The tract at residues Ala-4–Tyr-186 is large ATPase domain (RuvB-L). ATP is bound by residues Ile-25, Arg-26, Gly-67, Lys-70, Thr-71, Thr-72, Glu-133–Tyr-135, Arg-176, Tyr-186, and Arg-223. Thr-71 provides a ligand contact to Mg(2+). A small ATPAse domain (RuvB-S) region spans residues Lys-187–Asp-257. The tract at residues Val-260–Lys-337 is head domain (RuvB-H). DNA contacts are provided by Arg-296, Arg-315, and Arg-320.

It belongs to the RuvB family. Homohexamer. Forms an RuvA(8)-RuvB(12)-Holliday junction (HJ) complex. HJ DNA is sandwiched between 2 RuvA tetramers; dsDNA enters through RuvA and exits via RuvB. An RuvB hexamer assembles on each DNA strand where it exits the tetramer. Each RuvB hexamer is contacted by two RuvA subunits (via domain III) on 2 adjacent RuvB subunits; this complex drives branch migration. In the full resolvosome a probable DNA-RuvA(4)-RuvB(12)-RuvC(2) complex forms which resolves the HJ.

The protein localises to the cytoplasm. It carries out the reaction ATP + H2O = ADP + phosphate + H(+). Its function is as follows. The RuvA-RuvB-RuvC complex processes Holliday junction (HJ) DNA during genetic recombination and DNA repair, while the RuvA-RuvB complex plays an important role in the rescue of blocked DNA replication forks via replication fork reversal (RFR). RuvA specifically binds to HJ cruciform DNA, conferring on it an open structure. The RuvB hexamer acts as an ATP-dependent pump, pulling dsDNA into and through the RuvAB complex. RuvB forms 2 homohexamers on either side of HJ DNA bound by 1 or 2 RuvA tetramers; 4 subunits per hexamer contact DNA at a time. Coordinated motions by a converter formed by DNA-disengaged RuvB subunits stimulates ATP hydrolysis and nucleotide exchange. Immobilization of the converter enables RuvB to convert the ATP-contained energy into a lever motion, pulling 2 nucleotides of DNA out of the RuvA tetramer per ATP hydrolyzed, thus driving DNA branch migration. The RuvB motors rotate together with the DNA substrate, which together with the progressing nucleotide cycle form the mechanistic basis for DNA recombination by continuous HJ branch migration. Branch migration allows RuvC to scan DNA until it finds its consensus sequence, where it cleaves and resolves cruciform DNA. This is Holliday junction branch migration complex subunit RuvB from Aliivibrio fischeri (strain ATCC 700601 / ES114) (Vibrio fischeri).